The chain runs to 259 residues: Dickkopf-related protein 2 (259 aa).

Residues 1–33 form the signal peptide; the sequence is MAALMRVKDSSRCLLLLAAVLMVESSQLGSSRA. A disordered region spans residues 42–70; the sequence is LGGETPAQSANRSAGMNQGLAFGGSKKGK. Over residues 47–57 the composition is skewed to polar residues; the sequence is PAQSANRSAGM. A glycan (N-linked (GlcNAc...) asparagine) is linked at asparagine 52. Positions 78-127 are DKK-type Cys-1; sequence CSSDKECEVGRYCHSPHQGSSACMLCRRKKKRCHRDGMCCPGTRCNNGIC. Intrachain disulfides connect cysteine 183/cysteine 195, cysteine 189/cysteine 204, cysteine 194/cysteine 231, cysteine 214/cysteine 239, and cysteine 233/cysteine 256. The DKK-type Cys-2 stretch occupies residues 183–256; the sequence is CLRSSDCIDG…YSSKARLHVC (74 aa).

It belongs to the dickkopf family. As to quaternary structure, interacts with LRP5 and LRP6. In terms of processing, may be proteolytically processed by a furin-like protease.

The protein localises to the secreted. Functionally, antagonizes canonical Wnt signaling by inhibiting LRP5/6 interaction with Wnt and by forming a ternary complex with the transmembrane protein KREMEN that promotes internalization of LRP5/6. DKKs play an important role in vertebrate development, where they locally inhibit Wnt regulated processes such as antero-posterior axial patterning, limb development, somitogenesis and eye formation. In the adult, Dkks are implicated in bone formation and bone disease, cancer and Alzheimer disease. This is Dickkopf-related protein 2 from Mus musculus (Mouse).